A 148-amino-acid polypeptide reads, in one-letter code: Lysozyme C (148 aa).

A signal peptide spans 1–18; sequence MKAVIILGLVLLSVTVQG. The C-type lysozyme domain occupies 19 to 148; the sequence is KIFERCELAR…VSQYVQGCGV (130 aa). Disulfide bonds link cysteine 24–cysteine 146, cysteine 48–cysteine 134, cysteine 83–cysteine 99, and cysteine 95–cysteine 113. Residues glutamate 53 and aspartate 71 contribute to the active site.

The protein belongs to the glycosyl hydrolase 22 family. In terms of assembly, monomer.

Its subcellular location is the secreted. It carries out the reaction Hydrolysis of (1-&gt;4)-beta-linkages between N-acetylmuramic acid and N-acetyl-D-glucosamine residues in a peptidoglycan and between N-acetyl-D-glucosamine residues in chitodextrins.. Its function is as follows. Lysozymes have primarily a bacteriolytic function; those in tissues and body fluids are associated with the monocyte-macrophage system and enhance the activity of immunoagents. This chain is Lysozyme C (LYZ), found in Miopithecus talapoin (Angolan talapoin).